The sequence spans 319 residues: Acetyl esterase (319 aa).

The Involved in the stabilization of the negatively charged intermediate by the formation of the oxyanion hole signature appears at 91–93 (HGG). Catalysis depends on residues Ser-165, Asp-262, and His-292.

It belongs to the 'GDXG' lipolytic enzyme family. In terms of assembly, homodimer. Interacts with MalT and MelA.

The protein localises to the cytoplasm. Functionally, displays esterase activity towards short chain fatty esters (acyl chain length of up to 8 carbons). Able to hydrolyze triacetylglycerol (triacetin) and tributyrylglycerol (tributyrin), but not trioleylglycerol (triolein) or cholesterol oleate. Negatively regulates MalT activity by antagonizing maltotriose binding. Inhibits MelA galactosidase activity. The sequence is that of Acetyl esterase from Escherichia coli (strain 55989 / EAEC).